We begin with the raw amino-acid sequence, 167 residues long: Small ribosomal subunit protein uS5 (167 aa).

The region spanning 12–75 (LEERVVTINR…EDAKKNMVLV (64 aa)) is the S5 DRBM domain.

Belongs to the universal ribosomal protein uS5 family. In terms of assembly, part of the 30S ribosomal subunit. Contacts proteins S4 and S8.

In terms of biological role, with S4 and S12 plays an important role in translational accuracy. Its function is as follows. Located at the back of the 30S subunit body where it stabilizes the conformation of the head with respect to the body. This chain is Small ribosomal subunit protein uS5, found in Listeria monocytogenes serotype 4b (strain F2365).